Consider the following 581-residue polypeptide: Proteasome-associated ATPase (581 aa).

The segment at 1–28 is disordered; it reads MTSSDLTQRKGLTMSDSTPDTPRSTPED. Residues 14 to 24 are compositionally biased toward polar residues; it reads MSDSTPDTPRS. Residues 27 to 66 are a coiled coil; the sequence is EDAARRLAVLSAQNERLAQVLGEARGKIVELQQQIEEFAK. 248 to 253 contacts ATP; that stretch reads GCGKTL. Residues 561–581 are disordered; sequence GSGRSAAGRTIETATSTGQYL. A compositionally biased stretch (polar residues) spans 572 to 581; sequence ETATSTGQYL. Positions 580 to 581 are docks into pockets in the proteasome alpha-ring; sequence YL.

The protein belongs to the AAA ATPase family. Homohexamer. Assembles into a hexameric ring structure that caps the 20S proteasome core. Strongly interacts with the prokaryotic ubiquitin-like protein Pup through a hydrophobic interface; the interacting region of ARC lies in its N-terminal coiled-coil domain. There is one Pup binding site per ARC hexamer ring. Upon ATP-binding, the C-terminus of ARC interacts with the alpha-rings of the proteasome core, possibly by binding to the intersubunit pockets.

Its pathway is protein degradation; proteasomal Pup-dependent pathway. Its function is as follows. ATPase which is responsible for recognizing, binding, unfolding and translocation of pupylated proteins into the bacterial 20S proteasome core particle. May be essential for opening the gate of the 20S proteasome via an interaction with its C-terminus, thereby allowing substrate entry and access to the site of proteolysis. Thus, the C-termini of the proteasomal ATPase may function like a 'key in a lock' to induce gate opening and therefore regulate proteolysis. This chain is Proteasome-associated ATPase, found in Sanguibacter keddieii (strain ATCC 51767 / DSM 10542 / NCFB 3025 / ST-74).